The following is a 127-amino-acid chain: V-type proton ATPase subunit F (127 aa).

It belongs to the V-ATPase F subunit family. As to quaternary structure, V-ATPase is a heteromultimeric enzyme made up of two complexes: the ATP-hydrolytic V1 complex and the proton translocation V0 complex. The V1 complex consists of three catalytic AB heterodimers that form a heterohexamer, three peripheral stalks each consisting of EG heterodimers, one central rotor including subunits D and F, and the regulatory subunits C and H. The proton translocation complex V0 consists of the proton transport subunit a, a ring of proteolipid subunits c9c'', rotary subunit d, subunits e and f, and the accessory subunits VhaAC45 and ATP6AP2.

Its function is as follows. Subunit of the V1 complex of vacuolar(H+)-ATPase (V-ATPase), a multisubunit enzyme composed of a peripheral complex (V1) that hydrolyzes ATP and a membrane integral complex (V0) that translocates protons. V-ATPase is responsible for acidifying and maintaining the pH of intracellular compartments and in some cell types, is targeted to the plasma membrane, where it is responsible for acidifying the extracellular environment. The chain is V-type proton ATPase subunit F (Vha14) from Anopheles gambiae (African malaria mosquito).